The chain runs to 320 residues: MDVALEFLDPLILDKAYAWLLPSEPNVPDPTSRWDRDNVYRQVISILVLTQLGATSLYLFFSALSYYFVFDRRLEYHPRFLPNQVRQEIKSSLSAIPFINILTLPWFLAEVRGKSMLYRSVSDYGWPWLVVSSILYMAFNDIGIYWIHRLEHHPSVYKYIHKPHHKWIVPTPWAALAFHPLDGYVQSLPYQSVSLSPVAAILRAIPLTINSVFVFICPMQRHLYMVLFAAVQIWTILIHDGDMISGHWTEKFINSPAHHTLHHMYFTVNYGQYFTWADAYFGSHRAPEPALDPLHDALKVMRAKGLVDEQGNPIKKPKGE.

The next 3 helical transmembrane spans lie at 43 to 63, 91 to 111, and 127 to 147; these read VISILVLTQLGATSLYLFFSA, SSLSAIPFINILTLPWFLAEV, and PWLVVSSILYMAFNDIGIYWI. In terms of domain architecture, Fatty acid hydroxylase spans 134 to 283; the sequence is ILYMAFNDIG…FTWADAYFGS (150 aa). Positions 148-152 match the Histidine box-1 motif; that stretch reads HRLEH. The Histidine box-2 motif lies at 161–165; sequence HKPHH. The chain crosses the membrane as a helical span at residues 224–244; the sequence is YMVLFAAVQIWTILIHDGDMI. A Histidine box-3 motif is present at residues 259-263; it reads HTLHH.

It belongs to the sterol desaturase family. Requires Fe cation as cofactor.

The protein localises to the endoplasmic reticulum membrane. Delta(7)-sterol 5(6)-desaturase; part of the third module of ergosterol biosynthesis pathway that includes the late steps of the pathway. Erg3C is a minor delta(7)-sterol 5(6)-desaturase within the ergosterol pathway, erg3B being the major one. The third module or late pathway involves the ergosterol synthesis itself through consecutive reactions that mainly occur in the endoplasmic reticulum (ER) membrane. Firstly, the squalene synthase erg9 catalyzes the condensation of 2 farnesyl pyrophosphate moieties to form squalene, which is the precursor of all steroids. Squalene synthase is crucial for balancing the incorporation of farnesyl diphosphate (FPP) into sterol and nonsterol isoprene synthesis. Secondly, squalene is converted into lanosterol by the consecutive action of the squalene epoxidase erg1 and the lanosterol synthase erg7. Then, the delta(24)-sterol C-methyltransferase erg6 methylates lanosterol at C-24 to produce eburicol. Eburicol is the substrate of the sterol 14-alpha demethylase encoded by cyp51A and cyp51B, to yield 4,4,24-trimethyl ergosta-8,14,24(28)-trienol. The C-14 reductase erg24 then reduces the C14=C15 double bond which leads to 4,4-dimethylfecosterol. A sequence of further demethylations at C-4, involving the C-4 demethylation complex containing the C-4 methylsterol oxidases erg25A or erg25B, the sterol-4-alpha-carboxylate 3-dehydrogenase erg26 and the 3-keto-steroid reductase erg27, leads to the production of fecosterol via 4-methylfecosterol. The C-8 sterol isomerase erg2 then catalyzes the reaction which results in unsaturation at C-7 in the B ring of sterols and thus converts fecosterol to episterol. The sterol-C5-desaturase erg3B then catalyzes the introduction of a C-5 double bond in the B ring to produce 5-dehydroepisterol. The 2 other sterol-C5-desaturases, erg3A and erg3C, seem to be less important in ergosterol biosynthesis. The C-22 sterol desaturase erg5 further converts 5-dehydroepisterol into ergosta-5,7,22,24(28)-tetraen-3beta-ol by forming the C-22(23) double bond in the sterol side chain. Finally, ergosta-5,7,22,24(28)-tetraen-3beta-ol is substrate of the C-24(28) sterol reductases erg4A and erg4B to produce ergosterol. Possible alternative sterol biosynthetic pathways might exist from fecosterol to ergosterol, depending on the activities of the erg3 isoforms. This Aspergillus fumigatus (strain ATCC MYA-4609 / CBS 101355 / FGSC A1100 / Af293) (Neosartorya fumigata) protein is Delta(7)-sterol 5(6)-desaturase erg3C.